The sequence spans 304 residues: 33 kDa chaperonin (304 aa).

2 disulfide bridges follow: Cys-245/Cys-247 and Cys-278/Cys-281.

This sequence belongs to the HSP33 family. Post-translationally, under oxidizing conditions two disulfide bonds are formed involving the reactive cysteines. Under reducing conditions zinc is bound to the reactive cysteines and the protein is inactive.

It is found in the cytoplasm. In terms of biological role, redox regulated molecular chaperone. Protects both thermally unfolding and oxidatively damaged proteins from irreversible aggregation. Plays an important role in the bacterial defense system toward oxidative stress. This chain is 33 kDa chaperonin, found in Microcystis aeruginosa (strain NIES-843 / IAM M-2473).